The primary structure comprises 95 residues: Small ribosomal subunit protein bS18 (95 aa).

The protein belongs to the bacterial ribosomal protein bS18 family. In terms of assembly, part of the 30S ribosomal subunit. Forms a tight heterodimer with protein bS6.

Functionally, binds as a heterodimer with protein bS6 to the central domain of the 16S rRNA, where it helps stabilize the platform of the 30S subunit. This is Small ribosomal subunit protein bS18 from Rickettsia africae (strain ESF-5).